The following is a 154-amino-acid chain: Large ribosomal subunit protein uL15 (154 aa).

Residues 1-13 (MKLNELRDHEGAT) are compositionally biased toward basic and acidic residues. The interval 1–44 (MKLNELRDHEGATKNRKRIGRGIGSGTGKTGGCGVKGQKSRSGV) is disordered. Residues 21–35 (RGIGSGTGKTGGCGV) show a composition bias toward gly residues.

The protein belongs to the universal ribosomal protein uL15 family. In terms of assembly, part of the 50S ribosomal subunit.

In terms of biological role, binds to the 23S rRNA. The chain is Large ribosomal subunit protein uL15 from Bartonella bacilliformis (strain ATCC 35685 / KC583 / Herrer 020/F12,63).